Here is a 479-residue protein sequence, read N- to C-terminus: Ribosomal RNA small subunit methyltransferase F (479 aa).

S-adenosyl-L-methionine contacts are provided by residues 125-131 (AAAPGSK), Glu149, Asp176, and Asp194. The active-site Nucleophile is the Cys247.

The protein belongs to the class I-like SAM-binding methyltransferase superfamily. RsmB/NOP family.

It is found in the cytoplasm. The enzyme catalyses cytidine(1407) in 16S rRNA + S-adenosyl-L-methionine = 5-methylcytidine(1407) in 16S rRNA + S-adenosyl-L-homocysteine + H(+). In terms of biological role, specifically methylates the cytosine at position 1407 (m5C1407) of 16S rRNA. The chain is Ribosomal RNA small subunit methyltransferase F from Escherichia coli O139:H28 (strain E24377A / ETEC).